Reading from the N-terminus, the 440-residue chain is COP9 signalosome complex subunit 5 (440 aa).

Residues 71–218 (VLISKLSCEK…MGAFRTIESK (148 aa)) form the MPN domain. 3 residues coordinate Zn(2+): His-164, His-166, and Asp-177. The JAMM motif motif lies at 164 to 177 (HSHPGYDCWLSNID). The segment covering 319-341 (TQRGDSTETSSFGSMFSGDNTSD) has biased composition (polar residues). Disordered regions lie at residues 319–343 (TQRGDSTETSSFGSMFSGDNTSDVD) and 375–399 (SSRSTDNFHNSKKRMNSNQERCHDE).

This sequence belongs to the peptidase M67A family. CSN5 subfamily. Component of a COP9 signalosome-like (CSN) complex, composed of at least RRI1/CSN5, CSN9, RRI2/CSN10, PCI8/CSN11, CSN12 and CSI1. Within this complex it probably interacts directly with CSN12. Also interacts with RPN5. The cofactor is a divalent metal cation.

It localises to the cytoplasm. The protein resides in the nucleus. Its function is as follows. Catalytic component of the COP9 signalosome (CSN) complex that acts as an regulator of the ubiquitin (Ubl) conjugation pathway by mediating the deneddylation of the cullin subunit of SCF-type E3 ubiquitin-protein ligase complexes. The CSN complex is involved in the regulation of the mating pheromone response. The protein is COP9 signalosome complex subunit 5 (RRI1) of Saccharomyces cerevisiae (strain ATCC 204508 / S288c) (Baker's yeast).